We begin with the raw amino-acid sequence, 186 residues long: Putative manganese efflux pump MntP (186 aa).

6 consecutive transmembrane segments (helical) span residues 1 to 21 (MSFL…FAVS), 39 to 59 (LAVF…IGGS), 61 to 81 (VSSF…AFIG), 102 to 122 (YSVL…VGMS), 134 to 156 (VIII…YRLG), and 165 to 185 (ILGG…HMLW).

This sequence belongs to the MntP (TC 9.B.29) family.

The protein localises to the cell membrane. Functionally, probably functions as a manganese efflux pump. In Methanosarcina acetivorans (strain ATCC 35395 / DSM 2834 / JCM 12185 / C2A), this protein is Putative manganese efflux pump MntP.